The primary structure comprises 311 residues: MPRPNFMAVTEFTFEGFSIFEWHHRLILFVIFLVLYVLTLASNAIILIVIRLNHQLHTPMYFFLSVLSISETYYTVAINPQMLSGLLSPQQTISIPGCAAQLFFYLTFGVNKCFLLTAMGYDHYVAICNPLQYSVIMGKKACIQLVSGSWNIGLSTAIIQVSSVFSLPFCDANLISHFFCDIRPIMKLACADTTIKEFITLLISLCVLVLPMVLIFISYVLIVTTILKIASAEGRRKAFATCASHLTVVIVHYGRTSFIYLKPKSQNSLQDRLISVTYTVITPLLNPVVYSLRNKEVKDALLRALGRKPLS.

Over 1 to 29 (MPRPNFMAVTEFTFEGFSIFEWHHRLILF) the chain is Extracellular. The chain crosses the membrane as a helical span at residues 30–50 (VIFLVLYVLTLASNAIILIVI). The Cytoplasmic portion of the chain corresponds to 51 to 57 (RLNHQLH). The chain crosses the membrane as a helical span at residues 58–78 (TPMYFFLSVLSISETYYTVAI). At 79 to 98 (NPQMLSGLLSPQQTISIPGC) the chain is on the extracellular side. Cys98 and Cys180 are oxidised to a cystine. A helical membrane pass occupies residues 99 to 119 (AAQLFFYLTFGVNKCFLLTAM). At 120–149 (GYDHYVAICNPLQYSVIMGKKACIQLVSGS) the chain is on the cytoplasmic side. A helical membrane pass occupies residues 150–170 (WNIGLSTAIIQVSSVFSLPFC). The Extracellular portion of the chain corresponds to 171 to 202 (DANLISHFFCDIRPIMKLACADTTIKEFITLL). Residues 203 to 223 (ISLCVLVLPMVLIFISYVLIV) form a helical membrane-spanning segment. The Cytoplasmic portion of the chain corresponds to 224-237 (TTILKIASAEGRRK). The helical transmembrane segment at 238–254 (AFATCASHLTVVIVHYG) threads the bilayer. The Extracellular portion of the chain corresponds to 255–272 (RTSFIYLKPKSQNSLQDR). Residues 273–292 (LISVTYTVITPLLNPVVYSL) form a helical membrane-spanning segment. The Cytoplasmic segment spans residues 293–311 (RNKEVKDALLRALGRKPLS).

The protein belongs to the G-protein coupled receptor 1 family.

Its subcellular location is the cell membrane. Odorant receptor. This Homo sapiens (Human) protein is Olfactory receptor 10J4 (OR10J4).